Here is a 525-residue protein sequence, read N- to C-terminus: Bifunctional purine biosynthesis protein PurH (525 aa).

Positions 1 to 147 constitute an MGS-like domain; the sequence is MTKIERALIS…KNWAHVAIVT (147 aa).

It belongs to the PurH family.

It catalyses the reaction (6R)-10-formyltetrahydrofolate + 5-amino-1-(5-phospho-beta-D-ribosyl)imidazole-4-carboxamide = 5-formamido-1-(5-phospho-D-ribosyl)imidazole-4-carboxamide + (6S)-5,6,7,8-tetrahydrofolate. It carries out the reaction IMP + H2O = 5-formamido-1-(5-phospho-D-ribosyl)imidazole-4-carboxamide. It functions in the pathway purine metabolism; IMP biosynthesis via de novo pathway; 5-formamido-1-(5-phospho-D-ribosyl)imidazole-4-carboxamide from 5-amino-1-(5-phospho-D-ribosyl)imidazole-4-carboxamide (10-formyl THF route): step 1/1. The protein operates within purine metabolism; IMP biosynthesis via de novo pathway; IMP from 5-formamido-1-(5-phospho-D-ribosyl)imidazole-4-carboxamide: step 1/1. This is Bifunctional purine biosynthesis protein PurH from Chromobacterium violaceum (strain ATCC 12472 / DSM 30191 / JCM 1249 / CCUG 213 / NBRC 12614 / NCIMB 9131 / NCTC 9757 / MK).